The primary structure comprises 22 residues: Antimicrobial peptide 5 (22 aa).

Position 22 is a leucine amide (leucine 22).

As to expression, skin.

The protein localises to the secreted. Has very strong antimicrobial activity against Gram-positive bacterium S.aureus, Gram-negative bacterium E.coli and yeast C.albicans. Has strong hemolytic activity against human red blood cells. The sequence is that of Antimicrobial peptide 5 from Xenopus tropicalis (Western clawed frog).